The chain runs to 261 residues: Cytochrome c oxidase subunit 3 (261 aa).

The Mitochondrial matrix segment spans residues Met-1–Pro-15. The helical transmembrane segment at Trp-16–Trp-34 threads the bilayer. The Mitochondrial intermembrane segment spans residues Phe-35–Val-40. Residues Val-41–Thr-66 traverse the membrane as a helical segment. The Mitochondrial matrix segment spans residues Phe-67 to Thr-72. Residues Pro-73–Ser-105 traverse the membrane as a helical segment. At Leu-106–Glu-128 the chain is on the mitochondrial intermembrane side. A helical membrane pass occupies residues Val-129 to Met-152. The Mitochondrial matrix portion of the chain corresponds to Glu-153 to Asn-155. A helical transmembrane segment spans residues Arg-156 to Glu-183. Over Ala-184–Asp-190 the chain is Mitochondrial intermembrane. The chain crosses the membrane as a helical span at residues Gly-191 to Leu-223. Over Lys-224–His-232 the chain is Mitochondrial matrix. The helical transmembrane segment at Phe-233–Ile-256 threads the bilayer. Over Tyr-257 to Ser-261 the chain is Mitochondrial intermembrane.

The protein belongs to the cytochrome c oxidase subunit 3 family. As to quaternary structure, component of the cytochrome c oxidase (complex IV, CIV), a multisubunit enzyme composed of 14 subunits. The complex is composed of a catalytic core of 3 subunits MT-CO1, MT-CO2 and MT-CO3, encoded in the mitochondrial DNA, and 11 supernumerary subunits COX4I, COX5A, COX5B, COX6A, COX6B, COX6C, COX7A, COX7B, COX7C, COX8 and NDUFA4, which are encoded in the nuclear genome. The complex exists as a monomer or a dimer and forms supercomplexes (SCs) in the inner mitochondrial membrane with NADH-ubiquinone oxidoreductase (complex I, CI) and ubiquinol-cytochrome c oxidoreductase (cytochrome b-c1 complex, complex III, CIII), resulting in different assemblies (supercomplex SCI(1)III(2)IV(1) and megacomplex MCI(2)III(2)IV(2)).

The protein resides in the mitochondrion inner membrane. The catalysed reaction is 4 Fe(II)-[cytochrome c] + O2 + 8 H(+)(in) = 4 Fe(III)-[cytochrome c] + 2 H2O + 4 H(+)(out). Its function is as follows. Component of the cytochrome c oxidase, the last enzyme in the mitochondrial electron transport chain which drives oxidative phosphorylation. The respiratory chain contains 3 multisubunit complexes succinate dehydrogenase (complex II, CII), ubiquinol-cytochrome c oxidoreductase (cytochrome b-c1 complex, complex III, CIII) and cytochrome c oxidase (complex IV, CIV), that cooperate to transfer electrons derived from NADH and succinate to molecular oxygen, creating an electrochemical gradient over the inner membrane that drives transmembrane transport and the ATP synthase. Cytochrome c oxidase is the component of the respiratory chain that catalyzes the reduction of oxygen to water. Electrons originating from reduced cytochrome c in the intermembrane space (IMS) are transferred via the dinuclear copper A center (CU(A)) of subunit 2 and heme A of subunit 1 to the active site in subunit 1, a binuclear center (BNC) formed by heme A3 and copper B (CU(B)). The BNC reduces molecular oxygen to 2 water molecules using 4 electrons from cytochrome c in the IMS and 4 protons from the mitochondrial matrix. In Mammuthus primigenius (Siberian woolly mammoth), this protein is Cytochrome c oxidase subunit 3 (MT-CO3).